The chain runs to 500 residues: Cytochrome P450 6B4 (500 aa).

C443 is a binding site for heme.

Belongs to the cytochrome P450 family. It depends on heme as a cofactor.

Its subcellular location is the endoplasmic reticulum membrane. The protein resides in the microsome membrane. The enzyme catalyses an organic molecule + reduced [NADPH--hemoprotein reductase] + O2 = an alcohol + oxidized [NADPH--hemoprotein reductase] + H2O + H(+). In terms of biological role, enables the insect to feed on furanocoumarin-producing plants and evolved as an adaptation for detoxification of xanthotoxin and other furanocoumarins. This isozyme metabolizes isopimpinellin, imperatorin, and bergapten at high rates, xanthotoxin and psoralen at intermediate rates and angelicin, sphondin, and trioxsalen only at very low rates. The protein is Cytochrome P450 6B4 (CYP6B4) of Papilio glaucus (Eastern tiger swallowtail butterfly).